Consider the following 644-residue polypeptide: Chaperone protein DnaK (644 aa).

Thr195 carries the phosphothreonine; by autocatalysis modification. The segment at 598–644 is disordered; the sequence is KQAAPGAGAPGAGPGPEAAGGAQQAQAEPKKDEGVIDAEYVDVDEKK. Residues 612 to 624 show a composition bias toward low complexity; it reads GPEAAGGAQQAQA. Residues 632–644 are compositionally biased toward acidic residues; sequence VIDAEYVDVDEKK.

Belongs to the heat shock protein 70 family.

Its function is as follows. Acts as a chaperone. The sequence is that of Chaperone protein DnaK from Koribacter versatilis (strain Ellin345).